Consider the following 494-residue polypeptide: Cytochrome P450 2A6 (494 aa).

Residues Phe-107 and Asn-297 each contribute to the substrate site. A heme-binding site is contributed by Cys-439.

Belongs to the cytochrome P450 family. Heme is required as a cofactor. In terms of tissue distribution, liver.

Its subcellular location is the endoplasmic reticulum membrane. It is found in the microsome membrane. It catalyses the reaction 1,4-cineole + reduced [NADPH--hemoprotein reductase] + O2 = 2-exo-hydroxy-1,4-cineole + oxidized [NADPH--hemoprotein reductase] + H2O + H(+). Its function is as follows. Exhibits a high coumarin 7-hydroxylase activity. Can act in the hydroxylation of the anti-cancer drugs cyclophosphamide and ifosphamide. Competent in the metabolic activation of aflatoxin B1. Constitutes the major nicotine C-oxidase. Acts as a 1,4-cineole 2-exo-monooxygenase. Possesses low phenacetin O-deethylation activity. The chain is Cytochrome P450 2A6 (CYP2A6) from Homo sapiens (Human).